The chain runs to 292 residues: Hydroxysqualene synthase (292 aa).

This sequence belongs to the phytoene/squalene synthase family. HpnC subfamily.

It catalyses the reaction presqualene diphosphate + H2O = hydroxysqualene + diphosphate. It functions in the pathway secondary metabolite biosynthesis; hopanoid biosynthesis. In terms of biological role, involved in the biosynthesis of the hopanoid precursor squalene (SQ) from farnesyl diphosphate (FPP). Catalyzes the second step, the conversion of presqualene diphosphate (PSPP) to hydroxysqualene (HSQ). The polypeptide is Hydroxysqualene synthase (Sinorhizobium fredii (strain NBRC 101917 / NGR234)).